The following is a 116-amino-acid chain: Large ribosomal subunit protein bL17 (116 aa).

This sequence belongs to the bacterial ribosomal protein bL17 family. In terms of assembly, part of the 50S ribosomal subunit. Contacts protein L32.

The polypeptide is Large ribosomal subunit protein bL17 (Microcystis aeruginosa (strain NIES-843 / IAM M-2473)).